The following is a 138-amino-acid chain: Protein FAM136A (138 aa).

Belongs to the FAM136 family.

The polypeptide is Protein FAM136A (fam136a) (Xenopus laevis (African clawed frog)).